The following is a 173-amino-acid chain: 5-hydroxymethyl-dUMP N-hydrolase (173 aa).

Alanine 2 bears the N-acetylalanine mark. 5-hydroxymethyl-dUMP is bound at residue glycine 16. Phosphoserine is present on serine 17. Isoleucine 18, arginine 19, glycine 20, serine 87, glycine 89, and glutamate 93 together coordinate 5-hydroxymethyl-dUMP. Phosphoserine is present on serine 87. Serine 112, serine 117, serine 127, and serine 158 each carry phosphoserine. 5-hydroxymethyl-dUMP is bound at residue serine 117.

Belongs to the 2'-deoxynucleoside 5'-phosphate N-hydrolase 1 family. Monomer and homodimer.

The protein resides in the cytoplasm. The protein localises to the nucleus. It carries out the reaction 5-hydroxymethyl-dUMP + H2O = 5-hydroxymethyluracil + 2-deoxy-D-ribose 5-phosphate. Its function is as follows. Part of a nucleotide salvage pathway that eliminates epigenetically modified 5-hydroxymethyl-dCMP (hmdCMP) in a two-step process entailing deamination to cytotoxic 5-hydroxymethyl-dUMP (hmdUMP), followed by its hydrolysis into 5-hydroxymethyluracil (hmU) and 2-deoxy-D-ribose 5-phosphate (deoxyribosephosphate). Catalyzes the second step in that pathway, the hydrolysis of the N-glycosidic bond in hmdUMP, degrading this cytotoxic nucleotide to avoid its genomic integration. This Mus musculus (Mouse) protein is 5-hydroxymethyl-dUMP N-hydrolase.